The following is a 73-amino-acid chain: UPF0352 protein HSM_0097 (73 aa).

This sequence belongs to the UPF0352 family.

The sequence is that of UPF0352 protein HSM_0097 from Histophilus somni (strain 2336) (Haemophilus somnus).